A 216-amino-acid polypeptide reads, in one-letter code: Probable transaldolase (216 aa).

Lysine 85 acts as the Schiff-base intermediate with substrate in catalysis.

Belongs to the transaldolase family. Type 3B subfamily.

The protein localises to the cytoplasm. The enzyme catalyses D-sedoheptulose 7-phosphate + D-glyceraldehyde 3-phosphate = D-erythrose 4-phosphate + beta-D-fructose 6-phosphate. The protein operates within carbohydrate degradation; pentose phosphate pathway; D-glyceraldehyde 3-phosphate and beta-D-fructose 6-phosphate from D-ribose 5-phosphate and D-xylulose 5-phosphate (non-oxidative stage): step 2/3. Its function is as follows. Transaldolase is important for the balance of metabolites in the pentose-phosphate pathway. This Dehalococcoides mccartyi (strain ATCC BAA-2266 / KCTC 15142 / 195) (Dehalococcoides ethenogenes (strain 195)) protein is Probable transaldolase.